A 96-amino-acid chain; its full sequence is Co-chaperonin GroES (96 aa).

This sequence belongs to the GroES chaperonin family. In terms of assembly, heptamer of 7 subunits arranged in a ring. Interacts with the chaperonin GroEL.

Its subcellular location is the cytoplasm. Functionally, together with the chaperonin GroEL, plays an essential role in assisting protein folding. The GroEL-GroES system forms a nano-cage that allows encapsulation of the non-native substrate proteins and provides a physical environment optimized to promote and accelerate protein folding. GroES binds to the apical surface of the GroEL ring, thereby capping the opening of the GroEL channel. The polypeptide is Co-chaperonin GroES (Shewanella pealeana (strain ATCC 700345 / ANG-SQ1)).